A 64-amino-acid polypeptide reads, in one-letter code: Large ribosomal subunit protein uL29 (64 aa).

Belongs to the universal ribosomal protein uL29 family.

This is Large ribosomal subunit protein uL29 from Maridesulfovibrio salexigens (strain ATCC 14822 / DSM 2638 / NCIMB 8403 / VKM B-1763) (Desulfovibrio salexigens).